The following is a 394-amino-acid chain: MAKAKFERSKPHVNVGTIGHVDHGKTTLTAAISHVLAKTYGGEAKDFSQIDNAPEERERGITINTSHIEYDTPSRHYAHVDCPGHADYVKNMITGAAQMDGAILVVASTDGPMPQTREHILLSRQVGVPFIIVFMNKCDMVDDAELLELVEMEVRELLSEYDFPGDDLPVIQGSALKALEGEPEWEAKILELAAALDSYIPEPERDIDKPFLMPIEDVFSISGRGTVVTGRVERGIVRVGDEVEIVGIRTTTKTTCTGVEMFRKLLDEGRAGENCGILLRGTKRDDVERGQVLSKPGSINPHTTFESEVYVLSKEEGGRHTPFFKGYRPQFYFRTTDVTGTIELPEGVEMVMPGDNIKMKVTLICPIAMDEGLRFAIREGGRTVGAGVVAKIFA.

The region spanning 10 to 204 is the tr-type G domain; that stretch reads KPHVNVGTIG…ALDSYIPEPE (195 aa). Positions 19-26 are G1; the sequence is GHVDHGKT. A GTP-binding site is contributed by 19 to 26; it reads GHVDHGKT. Residue Thr-26 coordinates Mg(2+). Residues 60-64 are G2; that stretch reads GITIN. The interval 81-84 is G3; it reads DCPG. Residues 81 to 85 and 136 to 139 contribute to the GTP site; these read DCPGH and NKCD. The segment at 136–139 is G4; the sequence is NKCD. Residues 174–176 are G5; sequence SAL.

Belongs to the TRAFAC class translation factor GTPase superfamily. Classic translation factor GTPase family. EF-Tu/EF-1A subfamily. As to quaternary structure, monomer.

The protein localises to the cytoplasm. It carries out the reaction GTP + H2O = GDP + phosphate + H(+). Its function is as follows. GTP hydrolase that promotes the GTP-dependent binding of aminoacyl-tRNA to the A-site of ribosomes during protein biosynthesis. The chain is Elongation factor Tu 1 from Shewanella oneidensis (strain ATCC 700550 / JCM 31522 / CIP 106686 / LMG 19005 / NCIMB 14063 / MR-1).